Consider the following 290-residue polypeptide: MAGIDLQSLGISLPPGYSLQTAAARPDMYETLFDPEHPMSSLWPQFITSTPVSEKYWSQLTDIPLFASYQLMILHRDVENKHESVVACGNSVPVYCPLNDLPDGGWEAILQTGIENYRAGHKQHPNLLSALGVTVASAHRQQGLADIVIQTLRALANQAHFEALVVPLRPTKKSEHPMVPLEEYVHWKLDEHARPDDQVSYDPWLRKHLSYGGQMVRIAPRSMTIAAHADQWKDWTGCDLAALAESGSDTSSKGLVEMPIPRALVPVQYDPVSKVASYVEPNVWVVHPIH.

157–163 (NQAHFEA) contacts acetyl-CoA.

Belongs to the acetyltransferase family. GCN5 subfamily.

Its pathway is secondary metabolite metabolism. Arginine N-acetyltransferase; part of the cluster that mediates the biosynthesis of a highly modified cyclo-arginine-tryptophan dipeptide (cRW). Within the pathway, avaD catalyzes the N-acetylation of the guanidine group. The first step of the pathway is perfornmed by the arginine-containing cyclodipeptide synthase (RCPDS) avaA that acts as the scaffold-generating enzyme and is responsible for formation of the cyclo-Arg-Trp (cRW) diketopiperazine. AvaB then acts as a multifunctional flavoenzyme that is responsible for generating the cyclo-Arg-formylkynurenine DKP, which can be deformylated by avaC. AvaB then further catalyzes an additional N-oxidation followed by cyclization and dehydration. The next step is an N-acetylation of the guanidine group catalyzed by the arginine N-acetyltransferase avaD. The roles of the additional enzymes identified within the ava cluster still have to be determined. This Aspergillus versicolor protein is Arginine N-acetyltransferase avaD.